We begin with the raw amino-acid sequence, 351 residues long: Nicotinate-nucleotide--dimethylbenzimidazole phosphoribosyltransferase (351 aa).

Glutamate 317 acts as the Proton acceptor in catalysis.

The protein belongs to the CobT family.

The catalysed reaction is 5,6-dimethylbenzimidazole + nicotinate beta-D-ribonucleotide = alpha-ribazole 5'-phosphate + nicotinate + H(+). It functions in the pathway nucleoside biosynthesis; alpha-ribazole biosynthesis; alpha-ribazole from 5,6-dimethylbenzimidazole: step 1/2. In terms of biological role, catalyzes the synthesis of alpha-ribazole-5'-phosphate from nicotinate mononucleotide (NAMN) and 5,6-dimethylbenzimidazole (DMB). This Pseudomonas putida (strain ATCC 47054 / DSM 6125 / CFBP 8728 / NCIMB 11950 / KT2440) protein is Nicotinate-nucleotide--dimethylbenzimidazole phosphoribosyltransferase.